The following is a 255-amino-acid chain: MASATATTSAADLAAVKVVLLDIEGTVCPISFVKDVLFPYALQALPVTLDKKWDSPDFAPYRNAFPEPAASSRPVFEAHVADLVKRDVKVSYLKALQGYLWLAGYESGDIKAPLFPDVSPSMRAWHDAGIKLIIYSSGSVPAQKLLFGHTNASPPSLIPIISDWFDTVNAGMKMESSSYTSILSRYPDTQPQEWLFLSDNVDEVSAARAAGMHSLVVVRPGNAPLPECHVGEGQAVQTFEGLAVGGKRNESSKSS.

D22 and E24 together coordinate Mg(2+). Substrate is bound by residues 136 to 137 (SS) and K173. D199 serves as a coordination point for Mg(2+).

This sequence belongs to the HAD-like hydrolase superfamily. MasA/MtnC family. Monomer. The cofactor is Mg(2+).

Its subcellular location is the cytoplasm. It localises to the nucleus. The catalysed reaction is 5-methylsulfanyl-2,3-dioxopentyl phosphate + H2O = 1,2-dihydroxy-5-(methylsulfanyl)pent-1-en-3-one + phosphate. The protein operates within amino-acid biosynthesis; L-methionine biosynthesis via salvage pathway; L-methionine from S-methyl-5-thio-alpha-D-ribose 1-phosphate: step 3/6. It functions in the pathway amino-acid biosynthesis; L-methionine biosynthesis via salvage pathway; L-methionine from S-methyl-5-thio-alpha-D-ribose 1-phosphate: step 4/6. In terms of biological role, bifunctional enzyme that catalyzes the enolization of 2,3-diketo-5-methylthiopentyl-1-phosphate (DK-MTP-1-P) into the intermediate 2-hydroxy-3-keto-5-methylthiopentenyl-1-phosphate (HK-MTPenyl-1-P), which is then dephosphorylated to form the acireductone 1,2-dihydroxy-3-keto-5-methylthiopentene (DHK-MTPene). This is Enolase-phosphatase E1 from Verticillium alfalfae (strain VaMs.102 / ATCC MYA-4576 / FGSC 10136) (Verticillium wilt of alfalfa).